We begin with the raw amino-acid sequence, 205 residues long: MSLLVKVCGMTSKEDATMCEQLGVDFLGFIFHPSSPRNVDAAFARSVKTDGAKKVGVFVKQSATEVIETLKNGQLDFAQLHGGQNEEFCKAVGKERVIKVLWPQKYDSVKEFQADIDRFVPHCTYLLFDAGKSGGGHGIAMEFEVFKDVTIPVPWLLAGGLSAENLREALDTAQPNGVDLNSGVESEPGKKERNKLAAAFAAIGQ.

Belongs to the TrpF family.

It catalyses the reaction N-(5-phospho-beta-D-ribosyl)anthranilate = 1-(2-carboxyphenylamino)-1-deoxy-D-ribulose 5-phosphate. Its pathway is amino-acid biosynthesis; L-tryptophan biosynthesis; L-tryptophan from chorismate: step 3/5. The chain is N-(5'-phosphoribosyl)anthranilate isomerase from Maridesulfovibrio salexigens (strain ATCC 14822 / DSM 2638 / NCIMB 8403 / VKM B-1763) (Desulfovibrio salexigens).